The primary structure comprises 229 residues: 1-(5-phosphoribosyl)-5-[(5-phosphoribosylamino)methylideneamino] imidazole-4-carboxamide isomerase (229 aa).

The Proton acceptor role is filled by D8. D125 (proton donor) is an active-site residue.

The protein belongs to the HisA/HisF family.

Its subcellular location is the cytoplasm. The catalysed reaction is 1-(5-phospho-beta-D-ribosyl)-5-[(5-phospho-beta-D-ribosylamino)methylideneamino]imidazole-4-carboxamide = 5-[(5-phospho-1-deoxy-D-ribulos-1-ylimino)methylamino]-1-(5-phospho-beta-D-ribosyl)imidazole-4-carboxamide. It functions in the pathway amino-acid biosynthesis; L-histidine biosynthesis; L-histidine from 5-phospho-alpha-D-ribose 1-diphosphate: step 4/9. The protein is 1-(5-phosphoribosyl)-5-[(5-phosphoribosylamino)methylideneamino] imidazole-4-carboxamide isomerase of Thermococcus onnurineus (strain NA1).